The following is a 500-amino-acid chain: TBC1 domain family member 10A (500 aa).

Basic and acidic residues predominate over residues 1–10 (MAKSSRENGP). The interval 1-45 (MAKSSRENGPREPAAGGSLSGTRESLAQGPDAATADELSSLGSDS) is disordered. A phosphoserine mark is found at S39, S40, and S45. In terms of domain architecture, Rab-GAP TBC spans 111-299 (GIPPSLRGRA…RVWDMFFCEG (189 aa)). 2 disordered regions span residues 396–415 (AEPG…LPPD) and 420–500 (SSKA…DTYL). The residue at position 407 (S407) is a Phosphoserine. The span at 438 to 453 (TSAQLDKSPGLSQATV) shows a compositional bias: polar residues. Phosphothreonine is present on T477. A binding to the PDZ domain of EBP50 region spans residues 497-500 (DTYL).

As to quaternary structure, binds to the first PDZ domain of NHERF1 and NHERF2. Expressed in most tissues, except for skeletal muscle.

The protein resides in the cell projection. The protein localises to the microvillus. Functionally, GTPase-activating protein (GAP) specific for RAB27A and RAB35. Does not show GAP activity for RAB2A, RAB3A and RAB4A. The chain is TBC1 domain family member 10A (Tbc1d10a) from Mus musculus (Mouse).